A 618-amino-acid polypeptide reads, in one-letter code: Camphene synthase, chloroplastic (618 aa).

The transit peptide at 1–51 (MALLSITPLVSRSCLSSSHEIKALRRTIPTLGICRPGKSVAHSINMCLTSV) directs the protein to the chloroplast. Positions 369, 373, and 521 each coordinate Mg(2+). A DDXXD motif motif is present at residues 369–373 (DDMYD).

This sequence belongs to the terpene synthase family. Tpsd subfamily. Requires Mg(2+) as cofactor. The cofactor is Mn(2+). K(+) serves as cofactor.

The protein localises to the plastid. The protein resides in the chloroplast. It carries out the reaction (2E)-geranyl diphosphate = (1S,4R)-camphene + diphosphate. Its pathway is terpene metabolism; oleoresin biosynthesis. Its function is as follows. Involved in defensive oleoresin formation in conifers in response to insect attack or other injury. Involved in monoterpene (C10) olefins biosynthesis. The polypeptide is Camphene synthase, chloroplastic (ag6) (Abies grandis (Grand fir)).